The following is a 455-amino-acid chain: Asparagine--tRNA ligase (455 aa).

Belongs to the class-II aminoacyl-tRNA synthetase family. As to quaternary structure, homodimer.

The protein localises to the cytoplasm. It carries out the reaction tRNA(Asn) + L-asparagine + ATP = L-asparaginyl-tRNA(Asn) + AMP + diphosphate + H(+). This chain is Asparagine--tRNA ligase, found in Lawsonia intracellularis (strain PHE/MN1-00).